A 157-amino-acid chain; its full sequence is MGGWMSCAPPIYTPHTNSWTESGWDRTSWWRWSAQRWSGWSFKIVRANKALRVMAKTKMPLVLIPPSPNKPYSKLAINQELHLTPHKKTSPATSSSLKPRPGPRGYLNARLSWRCPTLSRKVRVPTIKVPMVRAPSTKPSKTSSSNNPWPLTPRMRG.

2 disordered regions span residues 76–105 (AINQELHLTPHKKTSPATSSSLKPRPGPRG) and 132–157 (VRAPSTKPSKTSSSNNPWPLTPRMRG). A compositionally biased stretch (low complexity) spans 135–148 (PSTKPSKTSSSNNP).

The protein to M.pneumoniae MPN_091 and MPN_413.

This is an uncharacterized protein from Mycoplasma pneumoniae (strain ATCC 29342 / M129 / Subtype 1) (Mycoplasmoides pneumoniae).